Reading from the N-terminus, the 197-residue chain is Pyridoxal 5'-phosphate synthase subunit PdxT (197 aa).

Residue Gly54 to Ser56 participates in L-glutamine binding. Catalysis depends on Cys86, which acts as the Nucleophile. L-glutamine-binding positions include Arg113 and Ile141 to Arg142. Residues His177 and Glu179 each act as charge relay system in the active site.

Belongs to the glutaminase PdxT/SNO family. As to quaternary structure, in the presence of PdxS, forms a dodecamer of heterodimers. Only shows activity in the heterodimer.

It catalyses the reaction aldehydo-D-ribose 5-phosphate + D-glyceraldehyde 3-phosphate + L-glutamine = pyridoxal 5'-phosphate + L-glutamate + phosphate + 3 H2O + H(+). It carries out the reaction L-glutamine + H2O = L-glutamate + NH4(+). The protein operates within cofactor biosynthesis; pyridoxal 5'-phosphate biosynthesis. Catalyzes the hydrolysis of glutamine to glutamate and ammonia as part of the biosynthesis of pyridoxal 5'-phosphate. The resulting ammonia molecule is channeled to the active site of PdxS. In Haloarcula marismortui (strain ATCC 43049 / DSM 3752 / JCM 8966 / VKM B-1809) (Halobacterium marismortui), this protein is Pyridoxal 5'-phosphate synthase subunit PdxT.